The sequence spans 249 residues: Protein TIFY 10B (249 aa).

The region spanning 113–148 is the Tify domain; that stretch reads PESQSAPLTIFYGGRVMVFDDFSAEKAKEVIDLANK. Positions 204-229 match the Jas motif; sequence PIARRASLHRFLEKRKDRITSKAPYQ. Residues 206-213 carry the Nuclear localization signal motif; that stretch reads ARRASLHR. The segment at 225–249 is disordered; the sequence is KAPYQIDGSAEASSKPTNPAWLSSR. The segment covering 235-249 has biased composition (polar residues); it reads EASSKPTNPAWLSSR.

The protein belongs to the TIFY/JAZ family. As to quaternary structure, homo- and heterodimer. Interacts with COI1, MYC2, MYC3, MYC4, AFPH2/NINJA, TIFY10A/JAZ1, TIFY6B/JAZ3, TIFY11A/JAZ5, TIFY11B/JAZ6, TIFY5A/JAZ8, TIFY7/JAZ9, TIFY9/JAZ10, TIFY3A/JAZ11 and TIFY3B/JAZ12. Interacts with RHD6 and RSL1. (Microbial infection) Interacts with the pathogenic Pseudomonas syringae HopZ1a protein. In terms of processing, (Microbial infection) Acetylated by Pseudomonas syringae HopZ1a. Ubiquitinated. Targeted for degradation by the SCF(COI1) E3 ubiquitin ligase-proteasome pathway during jasmonate signaling. In terms of tissue distribution, expressed in cotyledons, hypocotyls, roots, sepals, petal vascular tissue and stigmas of developing flowers. Expressed in stamen filaments after jasmonic acid treatment.

It localises to the nucleus. Functionally, repressor of jasmonate responses. Jasmonoyl-isoleucine (JA-Ile) specifically promotes COI1-TIFY10B/JAZ2 interaction. Activated by MYC2, MYC3 and MYC4 transcription factors. Interacts with and suppresses RHD6 and RSL1 transcription factor activities to negatively regulate jasmonate-stimulated root hair development. The sequence is that of Protein TIFY 10B from Arabidopsis thaliana (Mouse-ear cress).